The sequence spans 1075 residues: Protein nervous wreck (1075 aa).

Residues 11–289 form the F-BAR domain; sequence VKFLKNLHTE…QAQQLTREYN (279 aa). Disordered stretches follow at residues 361–381 and 431–536; these read LRDS…LDTK and SASS…DEPI. Polar residues predominate over residues 431–453; sequence SASSISMRTDASGQGENPSSDSF. Residues 469-482 show a composition bias toward basic and acidic residues; that stretch reads PKQEQQLSRDRTFS. The span at 493–512 shows a compositional bias: low complexity; the sequence is SAAAASSAAAASSSMMASSA. 2 consecutive SH3 domains span residues 542 to 603 and 658 to 721; these read EAIF…IDQE and SDVE…ECDE. 3 disordered regions span residues 722-747, 769-837, and 864-917; these read MGEP…LPPA, SQDT…EKGA, and GADK…EGNA. Pro residues-rich tracts occupy residues 733–747 and 809–818; these read SPPP…LPPA and QPPPSLPPPQ. The segment covering 819 to 837 has biased composition (low complexity); it reads LAKAGGSAPGSGSKVEKGA. A compositionally biased stretch (basic and acidic residues) spans 883–897; the sequence is VSKEQPAEVAKKPDI.

As to quaternary structure, homodimer. Interacts (via SH3 domain 1) with WASp. Interacts (via SH3 domain 1) with shi/dynamin. Interacts (via SH3 domain 2) with Dap160. Interacts (via F-BAR domain) with SH3PX1. Interacts (via SH3 domain 2) with Snx16. Identified in a complex with Syn and Syt1. In terms of tissue distribution, detected in larval body wall muscle. Detected at the neuromuscular junction, on motoneuron axons and axon terminals, at synaptic boutons in the periactive zone surrounding the synapse (at protein level). Detected on motoneuron axons and axon terminals, at synaptic boutons in the periactive zone surrounding the synapse.

It localises to the endomembrane system. The protein resides in the synapse. It is found in the cell projection. The protein localises to the axon. Its subcellular location is the presynaptic cell membrane. It localises to the cytoplasmic vesicle. The protein resides in the secretory vesicle. It is found in the synaptic vesicle. The protein localises to the recycling endosome. In terms of biological role, adapter protein that provides a link between vesicular membrane traffic and the actin assembly machinery. Acts together with Cdc42 to stimulate actin nucleation mediated by WASp and the ARP2/3 complex. Binds to membranes enriched in phosphatidylinositol 4,5-bisphosphate and causes local membrane deformation. Required for normal structure and function of synapses at the neuromuscular junction. Plays a role in synaptic vesicle trafficking. Required for the release of a normal number of synaptic vesicles per action potential. The protein is Protein nervous wreck of Drosophila melanogaster (Fruit fly).